The primary structure comprises 663 residues: Alcohol oxidase 2 (663 aa).

D8–E38 lines the FAD pocket. The Proton acceptor role is filled by H567. Positions A661 to F663 match the Microbody targeting signal motif.

It belongs to the GMC oxidoreductase family. As to quaternary structure, homooctamer. FAD is required as a cofactor.

The protein resides in the peroxisome matrix. The catalysed reaction is a primary alcohol + O2 = an aldehyde + H2O2. It participates in energy metabolism; methane degradation. Minor isoform of alcohol oxidase, which catalyzes the oxidation of methanol to formaldehyde and hydrogen peroxide, the first step in the methanol utilization pathway of methylotrophic yeasts. This Komagataella phaffii (strain ATCC 76273 / CBS 7435 / CECT 11047 / NRRL Y-11430 / Wegner 21-1) (Yeast) protein is Alcohol oxidase 2 (AOX2).